The chain runs to 398 residues: DJ-1 protein homolog E (398 aa).

PfpI endopeptidase domains lie at 7–199 (KSAL…ESLG) and 210–393 (ASVL…TALG).

The protein belongs to the peptidase C56 family. Homotrimer. Expressed in roots and cauline leaves.

In terms of biological role, may be involved in oxidative stress response. The polypeptide is DJ-1 protein homolog E (DJ1E) (Arabidopsis thaliana (Mouse-ear cress)).